A 182-amino-acid chain; its full sequence is CASP-like protein 2B1 (182 aa).

Residues 1–12 (MKLIDRRMRLTE) lie on the Cytoplasmic side of the membrane. Residues 13–31 (LLLRCSISVFALLALILVV) form a helical membrane-spanning segment. Over 32–52 (TDTEVKLIFTIKKTAKYTDMK) the chain is Extracellular. Residues 53–73 (AVVFLVVANGIAAVYSLLQSV) form a helical membrane-spanning segment. Topologically, residues 74 to 89 (RCVVGTMKGKVLFSKP) are cytoplasmic. The chain crosses the membrane as a helical span at residues 90 to 110 (LAWAFFSGDQAMAYLNVAAIA). Topologically, residues 111–141 (ATAESGVIAREGEEDLQWMRVCTMYGKFCNQ) are extracellular. A helical transmembrane segment spans residues 142 to 162 (MAIGVSSALLASIAMVFVSCI). Residues 163–182 (SAFSLFRLYGATKDRRTTPW) lie on the Cytoplasmic side of the membrane.

This sequence belongs to the Casparian strip membrane proteins (CASP) family. In terms of assembly, homodimer and heterodimers.

The protein localises to the cell membrane. This is CASP-like protein 2B1 from Arabidopsis thaliana (Mouse-ear cress).